The following is a 364-amino-acid chain: S-adenosylmethionine:tRNA ribosyltransferase-isomerase (364 aa).

This sequence belongs to the QueA family. Monomer.

The protein resides in the cytoplasm. It catalyses the reaction 7-aminomethyl-7-carbaguanosine(34) in tRNA + S-adenosyl-L-methionine = epoxyqueuosine(34) in tRNA + adenine + L-methionine + 2 H(+). Its pathway is tRNA modification; tRNA-queuosine biosynthesis. Functionally, transfers and isomerizes the ribose moiety from AdoMet to the 7-aminomethyl group of 7-deazaguanine (preQ1-tRNA) to give epoxyqueuosine (oQ-tRNA). The chain is S-adenosylmethionine:tRNA ribosyltransferase-isomerase from Lachnoclostridium phytofermentans (strain ATCC 700394 / DSM 18823 / ISDg) (Clostridium phytofermentans).